Here is a 199-residue protein sequence, read N- to C-terminus: Peroxynitrite isomerase (199 aa).

Residues 20-26 (GVWEGSG) carry the GXWXGXG motif. Residues Lys-158 and His-190 each coordinate heme b.

It belongs to the nitrobindin family. Homodimer. The cofactor is heme b.

It carries out the reaction peroxynitrite = nitrate. Its pathway is nitrogen metabolism. Its function is as follows. Heme-binding protein able to scavenge peroxynitrite and to protect free L-tyrosine against peroxynitrite-mediated nitration, by acting as a peroxynitrite isomerase that converts peroxynitrite to nitrate. Therefore, this protein likely plays a role in peroxynitrite sensing and in the detoxification of reactive nitrogen and oxygen species (RNS and ROS, respectively). Is able to bind nitric oxide (NO) in vitro, but may act as a sensor of peroxynitrite levels in vivo. This chain is Peroxynitrite isomerase, found in Clavibacter sepedonicus (Clavibacter michiganensis subsp. sepedonicus).